Reading from the N-terminus, the 106-residue chain is Large ribosomal subunit protein eL42 (106 aa).

This sequence belongs to the eukaryotic ribosomal protein eL42 family.

This Candida tropicalis (Yeast) protein is Large ribosomal subunit protein eL42 (RPL44).